The following is a 331-amino-acid chain: Probable cyclic nucleotide synthase IK1_05630 (331 aa).

It belongs to the CD-NTase family. D12 subfamily.

Its function is as follows. Cyclic nucleotide synthase (second messenger synthase) of a CBASS antivirus system. CBASS (cyclic oligonucleotide-based antiphage signaling system) provides immunity against bacteriophage. The CD-NTase protein synthesizes cyclic nucleotides in response to infection; these serve as specific second messenger signals. The signals activate a diverse range of effectors, leading to bacterial cell death and thus abortive phage infection. A type I-B CBASS system. Functionally, probably a cyclic nucleotide synthase that makes second messenger nucleotide which activates a CBASS antiviral defense system. Protects B.subtilis against phage infection. When IK1_05630 and IK1_05631 are introduced in B.subtilis BEST7003 there is 1000-fold protection against phage SBSphiC. Both genes are required for protection. Activation leads to bacterial cell lysis and death, which occurs before the phage has finished its replication cycle, thus protecting non-infected bacteria by aborting the phage infection and preventing its propagation. In Bacillus cereus (strain VD146), this protein is Probable cyclic nucleotide synthase IK1_05630.